Reading from the N-terminus, the 430-residue chain is tRNA(Ile)-lysidine synthase (430 aa).

27-32 (SGGSDS) is an ATP binding site.

The protein belongs to the tRNA(Ile)-lysidine synthase family.

It is found in the cytoplasm. The enzyme catalyses cytidine(34) in tRNA(Ile2) + L-lysine + ATP = lysidine(34) in tRNA(Ile2) + AMP + diphosphate + H(+). Functionally, ligates lysine onto the cytidine present at position 34 of the AUA codon-specific tRNA(Ile) that contains the anticodon CAU, in an ATP-dependent manner. Cytidine is converted to lysidine, thus changing the amino acid specificity of the tRNA from methionine to isoleucine. The polypeptide is tRNA(Ile)-lysidine synthase (Rickettsia prowazekii (strain Madrid E)).